The chain runs to 344 residues: Acireductone dioxygenase (344 aa).

Positions 92, 94, 98, and 137 each coordinate Fe(2+). Ni(2+) is bound by residues H92, H94, E98, and H137.

Belongs to the acireductone dioxygenase (ARD) family. The cofactor is Fe(2+). It depends on Ni(2+) as a cofactor.

The protein localises to the cytoplasm. Its subcellular location is the nucleus. The enzyme catalyses 1,2-dihydroxy-5-(methylsulfanyl)pent-1-en-3-one + O2 = 4-methylsulfanyl-2-oxobutanoate + formate + 2 H(+). It catalyses the reaction 1,2-dihydroxy-5-(methylsulfanyl)pent-1-en-3-one + O2 = 3-(methylsulfanyl)propanoate + CO + formate + 2 H(+). It functions in the pathway amino-acid biosynthesis; L-methionine biosynthesis via salvage pathway; L-methionine from S-methyl-5-thio-alpha-D-ribose 1-phosphate: step 5/6. Functionally, catalyzes 2 different reactions between oxygen and the acireductone 1,2-dihydroxy-3-keto-5-methylthiopentene (DHK-MTPene) depending upon the metal bound in the active site. Fe-containing acireductone dioxygenase (Fe-ARD) produces formate and 2-keto-4-methylthiobutyrate (KMTB), the alpha-ketoacid precursor of methionine in the methionine recycle pathway. Ni-containing acireductone dioxygenase (Ni-ARD) produces methylthiopropionate, carbon monoxide and formate, and does not lie on the methionine recycle pathway. The protein is Acireductone dioxygenase of Leishmania braziliensis.